A 266-amino-acid chain; its full sequence is Putative carbamate hydrolase RutD (266 aa).

An AB hydrolase-1 domain is found at 14-115 (PVVVLISGLG…TMLVSVNGWL (102 aa)).

This sequence belongs to the AB hydrolase superfamily. Hydrolase RutD family.

The catalysed reaction is carbamate + 2 H(+) = NH4(+) + CO2. In terms of biological role, involved in pyrimidine catabolism. May facilitate the hydrolysis of carbamate, a reaction that can also occur spontaneously. The protein is Putative carbamate hydrolase RutD of Shigella flexneri serotype X (strain 2002017).